A 460-amino-acid polypeptide reads, in one-letter code: Cation efflux system protein CusC (460 aa).

An N-terminal signal peptide occupies residues Met-1–Gly-17. Cys-18 is lipidated: N-palmitoyl cysteine. A lipid anchor (S-diacylglycerol cysteine) is attached at Cys-18.

The protein belongs to the outer membrane factor (OMF) (TC 1.B.17) family. Homotrimer. Component of the cus efflux system composed of CusA, CusB, CusC and CusF.

It localises to the cell outer membrane. Forms pores that allow passive diffusion of cations across the outer membrane. Part of a cation efflux system that mediates resistance to copper and silver. This Escherichia coli O6:H1 (strain CFT073 / ATCC 700928 / UPEC) protein is Cation efflux system protein CusC (cusC).